The chain runs to 200 residues: LHFPL tetraspan subfamily member 6 protein (200 aa).

Positions 1–21 (MASSLTCAGVIWALLSFLCAA) are cleaved as a signal peptide. 2 consecutive transmembrane segments (helical) span residues 84–104 (ICTV…LTAI) and 123–143 (GIQF…PLGW). Asn154 carries an N-linked (GlcNAc...) asparagine glycan. The helical transmembrane segment at 172-192 (CTGAGAAAAMVLCTWMACFAG) threads the bilayer.

It belongs to the LHFP family.

The protein localises to the membrane. The protein is LHFPL tetraspan subfamily member 6 protein of Danio rerio (Zebrafish).